The chain runs to 92 residues: Putative regulatory protein Tpet_0986 (92 aa).

The protein belongs to the RemA family.

The polypeptide is Putative regulatory protein Tpet_0986 (Thermotoga petrophila (strain ATCC BAA-488 / DSM 13995 / JCM 10881 / RKU-1)).